The following is a 585-amino-acid chain: MSSPLDHLKTQLQRAMVAAYGETLSGADPLLVNASHPKFGDYQSNAPLPLAKQLNQPPRTIASTIVDHLEVGEAWEPPTIAGPGFINFTLKTSYLASQLELRLTDPRLGISAVKLPLRVVVDFSSPNIAKEMHVGHLRSTIIGDCLARILEFLGHEVLRLNHVGDWGTQFGMLITYLREVCPEALTAPDAVDLGDLVAFYRQAKQRFDSDPDFQAIARQEVVRLQSGEPDSLHAWQLLCAQSRREFEKIYNLLDIKLTERGESFYNPLLPQVIQALDQTGLLVEDQGAKCVFLEGYTNKAGDPQPLIVQKSDGGYIYATTDLAALRYRIEQDQADWIIYVTDAGQSTHFAQVFQVAQRAGWIPNRIRLVHVPFGLVQGEDGKKLKTRSGDTVRLQDLLDEAIDRARNDLVSRLEAEGRQETPEFIDHVAQVVGIGAVKYADLSQNRTSNYVFSYDKMLSLQGNTAPYLIYAYVRVQGISRKGQIDLEQLTEQPTLSLQEEEEKLLARHLLQLEDVLAQVTEDLLPNRLCQYLFELSQKFNQFYDRCPILQAEEPLRNSRLGLAQLTARTLKLGLSLLGIQVLERM.

Positions 126–136 match the 'HIGH' region motif; it reads PNIAKEMHVGH.

It belongs to the class-I aminoacyl-tRNA synthetase family. As to quaternary structure, monomer.

It localises to the cytoplasm. It carries out the reaction tRNA(Arg) + L-arginine + ATP = L-arginyl-tRNA(Arg) + AMP + diphosphate. This chain is Arginine--tRNA ligase, found in Cyanothece sp. (strain PCC 7425 / ATCC 29141).